A 58-amino-acid polypeptide reads, in one-letter code: MSNVIVKENESLDSALRRFKRNCAKAGIQQEIRKREHYEKPSVKRKKKSEAARKRKFK.

Positions 32-42 are enriched in basic and acidic residues; the sequence is IRKREHYEKPS. The segment at 32-58 is disordered; it reads IRKREHYEKPSVKRKKKSEAARKRKFK. Residues 43–58 are compositionally biased toward basic residues; the sequence is VKRKKKSEAARKRKFK.

It belongs to the bacterial ribosomal protein bS21 family.

In Lachnoclostridium phytofermentans (strain ATCC 700394 / DSM 18823 / ISDg) (Clostridium phytofermentans), this protein is Small ribosomal subunit protein bS21.